We begin with the raw amino-acid sequence, 651 residues long: Probable potassium transport system protein Kup (651 aa).

Transmembrane regions (helical) follow at residues 30-50 (LALA…LYSL), 71-91 (IISM…VIFV), 124-144 (LLLG…TPAI), 158-178 (PDAE…LFIV), 190-210 (FGPV…PWII), 233-253 (AMAF…EALY), 268-288 (WFGL…AMIL), 310-330 (LVTI…SGAF), 358-378 (IYIP…ILIF), 387-407 (AYGL…LVLA), 413-433 (WPMW…LSIF), and 437-457 (LLKI…VVII).

Belongs to the HAK/KUP transporter (TC 2.A.72) family.

The protein resides in the cell membrane. The enzyme catalyses K(+)(in) + H(+)(in) = K(+)(out) + H(+)(out). Transport of potassium into the cell. Likely operates as a K(+):H(+) symporter. This Cutibacterium acnes (strain DSM 16379 / KPA171202) (Propionibacterium acnes) protein is Probable potassium transport system protein Kup.